The primary structure comprises 189 residues: Dynactin subunit 6 (189 aa).

Belongs to the dynactin subunits 5/6 family. Dynactin subunit 6 subfamily. As to quaternary structure, subunit of dynactin, a multiprotein complex part of a tripartite complex with dynein and a adapter, such as BICDL1, BICD2 or HOOK3. The dynactin complex is built around ACTR1A/ACTB filament and consists of an actin-related filament composed of a shoulder domain, a pointed end and a barbed end.

It is found in the cytoplasm. The protein localises to the cytoskeleton. Its function is as follows. Part of the dynactin complex that activates the molecular motor dynein for ultra-processive transport along microtubules. The sequence is that of Dynactin subunit 6 (dynF) from Dictyostelium discoideum (Social amoeba).